Here is a 384-residue protein sequence, read N- to C-terminus: 23S rRNA (uracil(747)-C(5))-methyltransferase RlmC (384 aa).

Positions 7, 15, 18, and 94 each coordinate [4Fe-4S] cluster. Residues Gln219, Phe248, Glu269, and Asn316 each contribute to the S-adenosyl-L-methionine site. Cys343 serves as the catalytic Nucleophile.

This sequence belongs to the class I-like SAM-binding methyltransferase superfamily. RNA M5U methyltransferase family. RlmC subfamily.

The catalysed reaction is uridine(747) in 23S rRNA + S-adenosyl-L-methionine = 5-methyluridine(747) in 23S rRNA + S-adenosyl-L-homocysteine + H(+). Its function is as follows. Catalyzes the formation of 5-methyl-uridine at position 747 (m5U747) in 23S rRNA. The sequence is that of 23S rRNA (uracil(747)-C(5))-methyltransferase RlmC from Shewanella sp. (strain ANA-3).